Consider the following 178-residue polypeptide: Alkyl hydroperoxide reductase AhpD (178 aa).

Residue Cys131 is the Proton donor of the active site. Cys131 and Cys134 are oxidised to a cystine. Cys134 (cysteine sulfenic acid (-SOH) intermediate) is an active-site residue.

It belongs to the AhpD family.

The catalysed reaction is N(6)-[(R)-dihydrolipoyl]-L-lysyl-[lipoyl-carrier protein] + a hydroperoxide = N(6)-[(R)-lipoyl]-L-lysyl-[lipoyl-carrier protein] + an alcohol + H2O. Its function is as follows. Antioxidant protein with alkyl hydroperoxidase activity. Required for the reduction of the AhpC active site cysteine residues and for the regeneration of the AhpC enzyme activity. This is Alkyl hydroperoxide reductase AhpD from Methylocella silvestris (strain DSM 15510 / CIP 108128 / LMG 27833 / NCIMB 13906 / BL2).